Here is a 174-residue protein sequence, read N- to C-terminus: Methylamine utilization protein MauL (174 aa).

Its pathway is one-carbon metabolism; methylamine degradation. Functionally, probably involved in TTQ prosthetic group biosynthesis. In Methylophilus methylotrophus (Bacterium W3A1), this protein is Methylamine utilization protein MauL (mauL).